The chain runs to 220 residues: MKAVGILGSPRKYGNASKMLDAALKELENSGFEVEKVHISSKKINYCTGCGTCLAKGECVQRDDMDELKRLVEESDAVILASPVYYLNVTAQMKTFIDRMLPYGHRPTLKGKYGGSIVVYAGVGKPEEVAGYMNRVLKAWGIVPVGYAVGFGVIPGEVGDEDLKKASQLGSKIAEAFESKYRMEPSDEDLELQKQLLTLIKNYGHLMKADYEFWKEKGFI.

The [4Fe-4S] cluster site is built by cysteine 47, cysteine 50, cysteine 53, and cysteine 59.

The protein belongs to the SsuE family. Isf subfamily. Homodimer. Requires FMN as cofactor. It depends on [4Fe-4S] cluster as a cofactor.

Redox-active protein probably involved in electron transport. This Archaeoglobus fulgidus (strain ATCC 49558 / DSM 4304 / JCM 9628 / NBRC 100126 / VC-16) protein is Iron-sulfur flavoprotein AF_1436.